A 354-amino-acid polypeptide reads, in one-letter code: DNA integrity scanning protein DisA (354 aa).

Positions 6–144 constitute a DAC domain; it reads GIGIKNVLKI…GDIKYVLRES (139 aa). ATP is bound by residues Gly-73, Leu-91, and 104-108; that span reads TRHRT.

Belongs to the DisA family. In terms of assembly, homooctamer. The cofactor is Mg(2+).

It carries out the reaction 2 ATP = 3',3'-c-di-AMP + 2 diphosphate. Participates in a DNA-damage check-point that is active prior to asymmetric division when DNA is damaged. DisA forms globular foci that rapidly scan along the chromosomes during sporulation, searching for lesions. When a lesion is present, DisA pauses at the lesion site. This triggers a cellular response that culminates in a temporary block in sporulation initiation. Its function is as follows. Also has diadenylate cyclase activity, catalyzing the condensation of 2 ATP molecules into cyclic di-AMP (c-di-AMP). c-di-AMP acts as a signaling molecule that couples DNA integrity with progression of sporulation. The rise in c-di-AMP level generated by DisA while scanning the chromosome, operates as a positive signal that advances sporulation; upon encountering a lesion, the DisA focus arrests at the damaged site and halts c-di-AMP synthesis. The polypeptide is DNA integrity scanning protein DisA (Clostridium beijerinckii (strain ATCC 51743 / NCIMB 8052) (Clostridium acetobutylicum)).